We begin with the raw amino-acid sequence, 117 residues long: UPF0145 protein PH1682 (117 aa).

This sequence belongs to the UPF0145 family.

The polypeptide is UPF0145 protein PH1682 (Pyrococcus horikoshii (strain ATCC 700860 / DSM 12428 / JCM 9974 / NBRC 100139 / OT-3)).